Reading from the N-terminus, the 75-residue chain is Small ribosomal subunit protein bS18 (75 aa).

Belongs to the bacterial ribosomal protein bS18 family. As to quaternary structure, part of the 30S ribosomal subunit. Forms a tight heterodimer with protein bS6.

Its function is as follows. Binds as a heterodimer with protein bS6 to the central domain of the 16S rRNA, where it helps stabilize the platform of the 30S subunit. The chain is Small ribosomal subunit protein bS18 from Moorella thermoacetica (strain ATCC 39073 / JCM 9320).